The following is a 1017-amino-acid chain: Protein translocase subunit SecA 1 (1017 aa).

ATP is bound by residues Gln-143, Gly-161–Thr-165, and Asp-661. Residues Gly-978 to Arg-999 are disordered. Residues Cys-1003, Cys-1005, Cys-1014, and Cys-1015 each contribute to the Zn(2+) site.

The protein belongs to the SecA family. In terms of assembly, monomer and homodimer. Part of the essential Sec protein translocation apparatus which comprises SecA, SecYEG and auxiliary proteins SecDF. Other proteins may also be involved. It depends on Zn(2+) as a cofactor.

It is found in the cell inner membrane. The protein localises to the cytoplasm. The enzyme catalyses ATP + H2O + cellular proteinSide 1 = ADP + phosphate + cellular proteinSide 2.. Functionally, part of the Sec protein translocase complex. Interacts with the SecYEG preprotein conducting channel. Has a central role in coupling the hydrolysis of ATP to the transfer of proteins into and across the cell membrane, serving as an ATP-driven molecular motor driving the stepwise translocation of polypeptide chains across the membrane. The protein is Protein translocase subunit SecA 1 of Chlorobium chlorochromatii (strain CaD3).